Consider the following 719-residue polypeptide: MFQSSKGSNSSSTSSSRSASISTATPNTVVEDEELLCDPKSELTPPAVTTPLRPVSKSNNTVEDDSKPSFTYDLDVFNLCKEYLNTRNHHGLALIARQKGIPPILRFKVWPILLKSHPFVISPFIQPDSELINESTSSRSNSSSSSTSTGSTTPISTSSGNIKDAAIIDGGASDNDNDGNNDNNDKDNNSNDTSSKEKEEDEQNNEIRQKIKRDLAKYIQRLKYSQSKYTVGETEHEILSILENAIMKFTLKWGKIIKYDSSLTWIALNLAEWFPPIPKTPWVLVGKEYSSSHQSLIVNFLDDYSNYIDNIPDLREYLERLIYHDERISTISFREVYERLVLVLLHCPQPMSRRKKSDNQGQSQRRNQSEAQKDQQSFKVNKTTLPKTGGTIEERVSYFIYCLRKLIPELSQYFHEEQILTKFGCLDDEWLIWWLKFCGTKVWSKYDRGRIWDFMLGWRLKNPKRDFNYYYEKLNYVNRNTLEKLGPDIFWSVGNEEDDISGDKNVDANANEINNSEKTSTGKLVKREGDIKRSSFKDLVNELSNELHISKRVSTDGVITSSSSSSSPTTTKLAPSSSTSSTITPNVSIPFSRVDPHVALIFISLSLLKSKENILVELDQHEIRQFLSRLPSKSYKYNQKRTTKPKRTSYTSNASSTSNSPMGQSPVDRDEDSIFPTNRIVISNDSKDQKHKVNFIDNIIQEAGELWRKWLWSEMVEDN.

Low complexity-rich tracts occupy residues 1–22 (MFQS…ASIS), 135–159 (STSS…STSS), and 169–182 (DGGA…GNND). 5 disordered regions span residues 1-66 (MFQS…EDDS), 132-205 (INES…EQNN), 351-386 (MSRR…TTLP), 558-588 (VITS…PNVS), and 637-674 (YNQK…EDSI). The region spanning 100–459 (GIPPILRFKV…RIWDFMLGWR (360 aa)) is the Rab-GAP TBC domain. Positions 183 to 198 (NNDKDNNSNDTSSKEK) are enriched in basic and acidic residues. Residues 374-386 (DQQSFKVNKTTLP) are compositionally biased toward polar residues. The span at 638-647 (NQKRTTKPKR) shows a compositional bias: basic residues. Residues 648–660 (TSYTSNASSTSNS) are compositionally biased toward low complexity.

This sequence belongs to the OCA5 family.

Its subcellular location is the cytoplasm. The chain is Oxidant-induced cell-cycle arrest protein 5 (OCA5) from Candida dubliniensis (strain CD36 / ATCC MYA-646 / CBS 7987 / NCPF 3949 / NRRL Y-17841) (Yeast).